The following is a 189-amino-acid chain: Hypoxanthine/guanine phosphoribosyltransferase (189 aa).

The protein belongs to the purine/pyrimidine phosphoribosyltransferase family. Archaeal HPRT subfamily. Homodimer.

The protein resides in the cytoplasm. The enzyme catalyses IMP + diphosphate = hypoxanthine + 5-phospho-alpha-D-ribose 1-diphosphate. It carries out the reaction GMP + diphosphate = guanine + 5-phospho-alpha-D-ribose 1-diphosphate. Its pathway is purine metabolism; IMP biosynthesis via salvage pathway; IMP from hypoxanthine: step 1/1. Its function is as follows. Catalyzes a salvage reaction resulting in the formation of IMP that is energically less costly than de novo synthesis. This chain is Hypoxanthine/guanine phosphoribosyltransferase, found in Methanosarcina mazei (strain ATCC BAA-159 / DSM 3647 / Goe1 / Go1 / JCM 11833 / OCM 88) (Methanosarcina frisia).